We begin with the raw amino-acid sequence, 102 residues long: Putative septation protein SpoVG (102 aa).

The disordered stretch occupies residues 83–102 (TDEVIPDKNATSDNEESDEA).

The protein belongs to the SpoVG family.

Could be involved in septation. This chain is Putative septation protein SpoVG, found in Staphylococcus epidermidis (strain ATCC 35984 / DSM 28319 / BCRC 17069 / CCUG 31568 / BM 3577 / RP62A).